A 540-amino-acid chain; its full sequence is Phosphoenolpyruvate carboxykinase (ATP) (540 aa).

Residue R65 coordinates substrate. N6-acetyllysine is present on K87. Residues Y207 and K213 each coordinate substrate. Residues K213, H232, and 248-256 (GLSGTGKTT) contribute to the ATP site. 2 residues coordinate Mn(2+): K213 and H232. D269 is a Mn(2+) binding site. Residues E297, R333, 449 to 450 (RI), and T455 each bind ATP. R333 serves as a coordination point for substrate. At K523 the chain carries N6-acetyllysine.

Belongs to the phosphoenolpyruvate carboxykinase (ATP) family. Monomer. Mn(2+) is required as a cofactor.

Its subcellular location is the cytoplasm. It catalyses the reaction oxaloacetate + ATP = phosphoenolpyruvate + ADP + CO2. It functions in the pathway carbohydrate biosynthesis; gluconeogenesis. Involved in the gluconeogenesis. Catalyzes the conversion of oxaloacetate (OAA) to phosphoenolpyruvate (PEP) through direct phosphoryl transfer between the nucleoside triphosphate and OAA. This is Phosphoenolpyruvate carboxykinase (ATP) from Escherichia coli O45:K1 (strain S88 / ExPEC).